The primary structure comprises 276 residues: Casein kinase II subunit beta-3 (276 aa).

Disordered stretches follow at residues 1–22 (MYKE…LGGA) and 34–86 (KKLE…SEGD).

It belongs to the casein kinase 2 subunit beta family. Heterotetramer of two catalytic alpha subunits and two regulatory beta subunits. Interacts with CCA1. Interacts with LHY. In terms of processing, phosphorylated by alpha subunit.

It localises to the cytoplasm. Its subcellular location is the cytosol. The protein localises to the nucleus. In terms of biological role, plays a complex role in regulating the basal catalytic activity of the alpha subunit. The tetrameric holoenzyme CK2, composed of two alpha and two beta subunits, phosphorylates the transcription factor PIF1 after an exposure to light, resulting in a proteasome-dependent degradation of PIF1 and promotion of photomorphogenesis. CK2 phosphorylates translation initiation factors. May participate in the regulation of the initiation of translation. Stimulates the binding of CCA1 to promoters. In Arabidopsis thaliana (Mouse-ear cress), this protein is Casein kinase II subunit beta-3 (CKB3).